The primary structure comprises 296 residues: Small ribosomal subunit biogenesis GTPase RsgA (296 aa).

In terms of domain architecture, CP-type G spans 65-223; it reads INRIGRPAVA…LADTPGFSSI (159 aa). GTP is bound by residues 114–117 and 166–174; these read SKAD and GQSGAGKST. The Zn(2+) site is built by Cys-247, Cys-252, His-254, and Cys-260.

It belongs to the TRAFAC class YlqF/YawG GTPase family. RsgA subfamily. Monomer. Associates with 30S ribosomal subunit, binds 16S rRNA. Zn(2+) serves as cofactor.

It localises to the cytoplasm. Functionally, one of several proteins that assist in the late maturation steps of the functional core of the 30S ribosomal subunit. Helps release RbfA from mature subunits. May play a role in the assembly of ribosomal proteins into the subunit. Circularly permuted GTPase that catalyzes slow GTP hydrolysis, GTPase activity is stimulated by the 30S ribosomal subunit. This chain is Small ribosomal subunit biogenesis GTPase RsgA, found in Lactobacillus acidophilus (strain ATCC 700396 / NCK56 / N2 / NCFM).